A 201-amino-acid polypeptide reads, in one-letter code: 3-isopropylmalate dehydratase small subunit (201 aa).

The protein belongs to the LeuD family. LeuD type 1 subfamily. As to quaternary structure, heterodimer of LeuC and LeuD.

It carries out the reaction (2R,3S)-3-isopropylmalate = (2S)-2-isopropylmalate. Its pathway is amino-acid biosynthesis; L-leucine biosynthesis; L-leucine from 3-methyl-2-oxobutanoate: step 2/4. Catalyzes the isomerization between 2-isopropylmalate and 3-isopropylmalate, via the formation of 2-isopropylmaleate. The sequence is that of 3-isopropylmalate dehydratase small subunit from Escherichia coli O157:H7.